The chain runs to 609 residues: Threonine--tRNA ligase (609 aa).

The tract at residues methionine 1–valine 145 is editing domain. The catalytic stretch occupies residues isoleucine 194–proline 485. Cysteine 286, histidine 338, and histidine 458 together coordinate Zn(2+).

It belongs to the class-II aminoacyl-tRNA synthetase family. In terms of assembly, homodimer. Zn(2+) serves as cofactor.

It is found in the cytoplasm. The catalysed reaction is tRNA(Thr) + L-threonine + ATP = L-threonyl-tRNA(Thr) + AMP + diphosphate + H(+). Catalyzes the attachment of threonine to tRNA(Thr) in a two-step reaction: L-threonine is first activated by ATP to form Thr-AMP and then transferred to the acceptor end of tRNA(Thr). Also edits incorrectly charged L-seryl-tRNA(Thr). This chain is Threonine--tRNA ligase, found in Methanosphaerula palustris (strain ATCC BAA-1556 / DSM 19958 / E1-9c).